The sequence spans 197 residues: Fucoxanthin-chlorophyll a-c binding protein D, chloroplastic (197 aa).

Residues 1-31 (MKTAVIASLIAGAAAFAPAKNAARTSVATNM) constitute a chloroplast transit peptide. Transmembrane regions (helical) follow at residues 73–94 (ISML…PGTI), 114–133 (PAGG…SSVM), and 174–196 (GRAA…SLLP).

Belongs to the fucoxanthin chlorophyll protein family. In terms of assembly, the LHC complex of chromophytic algae is composed of fucoxanthin, chlorophyll A and C bound non-covalently by fucoxanthin chlorophyll proteins (FCPs). The ratio of the pigments in LHC; fucoxanthin: chlorophyll C: chlorophyll A; (0.6-1): (0.1-0.3): (1).

The protein localises to the plastid. The protein resides in the chloroplast thylakoid membrane. Functionally, the light-harvesting complex (LHC) functions as a light receptor, it captures and delivers excitation energy to photosystems with which it is closely associated. Energy is transferred from the carotenoid and chlorophyll C (or B) to chlorophyll A and the photosynthetic reaction centers where it is used to synthesize ATP and reducing power. The chain is Fucoxanthin-chlorophyll a-c binding protein D, chloroplastic (FCPD) from Phaeodactylum tricornutum (Diatom).